The chain runs to 496 residues: Ribose import ATP-binding protein RbsA (496 aa).

2 ABC transporter domains span residues 3 to 239 (IVME…VGRE) and 246 to 493 (ERTP…TGGN). 35 to 42 (GENGAGKS) serves as a coordination point for ATP.

It belongs to the ABC transporter superfamily. Ribose importer (TC 3.A.1.2.1) family. The complex is composed of an ATP-binding protein (RbsA), two transmembrane proteins (RbsC) and a solute-binding protein (RbsB).

It localises to the cell membrane. The enzyme catalyses D-ribose(out) + ATP + H2O = D-ribose(in) + ADP + phosphate + H(+). In terms of biological role, part of the ABC transporter complex RbsABC involved in ribose import. Responsible for energy coupling to the transport system. The sequence is that of Ribose import ATP-binding protein RbsA from Oceanobacillus iheyensis (strain DSM 14371 / CIP 107618 / JCM 11309 / KCTC 3954 / HTE831).